The following is a 131-amino-acid chain: Large ribosomal subunit protein bL12c (131 aa).

This sequence belongs to the bacterial ribosomal protein bL12 family. Homodimer. Part of the ribosomal stalk of the 50S ribosomal subunit. Forms a multimeric L10(L12)X complex, where L10 forms an elongated spine to which 2 to 4 L12 dimers bind in a sequential fashion. Binds GTP-bound translation factors.

The protein localises to the plastid. Its subcellular location is the chloroplast. Forms part of the ribosomal stalk which helps the ribosome interact with GTP-bound translation factors. Is thus essential for accurate translation. This chain is Large ribosomal subunit protein bL12c, found in Euglena gracilis.